Consider the following 316-residue polypeptide: HPr kinase/phosphorylase (316 aa).

Active-site residues include H143 and K164. G158–S165 contributes to the ATP binding site. S165 contacts Mg(2+). The Proton acceptor; for phosphorylation activity. Proton donor; for dephosphorylation activity role is filled by D182. The segment at L206–N215 is important for the catalytic mechanism of both phosphorylation and dephosphorylation. E207 is a Mg(2+) binding site. R251 is a catalytic residue. The important for the catalytic mechanism of dephosphorylation stretch occupies residues P272–R277.

The protein belongs to the HPrK/P family. Homohexamer. Mg(2+) serves as cofactor.

It catalyses the reaction [HPr protein]-L-serine + ATP = [HPr protein]-O-phospho-L-serine + ADP + H(+). It carries out the reaction [HPr protein]-O-phospho-L-serine + phosphate + H(+) = [HPr protein]-L-serine + diphosphate. Catalyzes the ATP- as well as the pyrophosphate-dependent phosphorylation of a specific serine residue in HPr, a phosphocarrier protein of the phosphoenolpyruvate-dependent sugar phosphotransferase system (PTS). HprK/P also catalyzes the pyrophosphate-producing, inorganic phosphate-dependent dephosphorylation (phosphorolysis) of seryl-phosphorylated HPr (P-Ser-HPr). This Stenotrophomonas maltophilia (strain R551-3) protein is HPr kinase/phosphorylase.